We begin with the raw amino-acid sequence, 665 residues long: Probable potassium transport system protein Kup (665 aa).

12 helical membrane-spanning segments follow: residues 15–35, 48–68, 100–120, 147–167, 173–193, 219–239, 251–271, 292–312, 348–368, 378–398, 403–423, and 431–451; these read SFLI…LYVM, ITPD…TLLT, WLII…MLTP, IIII…HFGT, IFGP…IVNL, LGFF…ALYS, LTWP…AAWI, MMPS…AIIA, IYMP…VLYF, YGLS…NYLL, PLPI…SFLI, and KGGF…YIWI.

The protein belongs to the HAK/KUP transporter (TC 2.A.72) family.

It is found in the cell membrane. The catalysed reaction is K(+)(in) + H(+)(in) = K(+)(out) + H(+)(out). In terms of biological role, transport of potassium into the cell. Likely operates as a K(+):H(+) symporter. The polypeptide is Probable potassium transport system protein Kup (Clostridium perfringens (strain ATCC 13124 / DSM 756 / JCM 1290 / NCIMB 6125 / NCTC 8237 / Type A)).